The chain runs to 669 residues: DNA ligase (669 aa).

Residues 34 to 38 (DAEYD), 83 to 84 (SL), and E114 each bind NAD(+). The active-site N6-AMP-lysine intermediate is the K116. Residues R137, E171, K287, and K311 each contribute to the NAD(+) site. Positions 405, 408, 423, and 428 each coordinate Zn(2+). A BRCT domain is found at 591–669 (NVESYFAGKT…EERFLQELNK (79 aa)).

It belongs to the NAD-dependent DNA ligase family. LigA subfamily. Requires Mg(2+) as cofactor. It depends on Mn(2+) as a cofactor.

It catalyses the reaction NAD(+) + (deoxyribonucleotide)n-3'-hydroxyl + 5'-phospho-(deoxyribonucleotide)m = (deoxyribonucleotide)n+m + AMP + beta-nicotinamide D-nucleotide.. DNA ligase that catalyzes the formation of phosphodiester linkages between 5'-phosphoryl and 3'-hydroxyl groups in double-stranded DNA using NAD as a coenzyme and as the energy source for the reaction. It is essential for DNA replication and repair of damaged DNA. The sequence is that of DNA ligase from Bacillus cereus (strain B4264).